Here is a 367-residue protein sequence, read N- to C-terminus: Selenoprotein Pa (367 aa).

The signal sequence occupies residues 1–19 (MWKALSLTLALCLLVGCSA). Sec-59 is a non-standard amino acid (selenocysteine). A glycan (N-linked (GlcNAc...) asparagine) is linked at Asn-109. The span at 191–220 (EVNKPVEEEPRQDHGHHEHGHHEHQGEAER) shows a compositional bias: basic and acidic residues. The segment at 191–241 (EVNKPVEEEPRQDHGHHEHGHHEHQGEAERHRHGHHHPHHHHHHHRGQQQV) is disordered. Residues 221-237 (HRHGHHHPHHHHHHHRG) are compositionally biased toward basic residues. 16 non-standard amino acids (selenocysteine) are found at residues Sec-267, Sec-273, Sec-279, Sec-290, Sec-292, Sec-294, Sec-310, Sec-320, Sec-322, Sec-336, Sec-338, Sec-346, Sec-353, Sec-355, Sec-362, and Sec-364. A disordered region spans residues 309–367 (LUHCDEPLPASUPUQGLKEQDNHIKETUQURPAPPAEUELSQPTUVUPAGDATUGURKK). Basic and acidic residues predominate over residues 326–336 (KEQDNHIKETU).

Belongs to the selenoprotein P family.

It localises to the secreted. Functionally, might be responsible for some of the extracellular antioxidant defense properties of selenium or might be involved in the transport of selenium. In Danio rerio (Zebrafish), this protein is Selenoprotein Pa (sepp1a).